The sequence spans 283 residues: 4-diphosphocytidyl-2-C-methyl-D-erythritol kinase (283 aa).

Residue Lys13 is part of the active site. Residue 96–106 participates in ATP binding; the sequence is PMGGGIGGGSS. Asp138 is an active-site residue.

It belongs to the GHMP kinase family. IspE subfamily.

The enzyme catalyses 4-CDP-2-C-methyl-D-erythritol + ATP = 4-CDP-2-C-methyl-D-erythritol 2-phosphate + ADP + H(+). It functions in the pathway isoprenoid biosynthesis; isopentenyl diphosphate biosynthesis via DXP pathway; isopentenyl diphosphate from 1-deoxy-D-xylulose 5-phosphate: step 3/6. Its function is as follows. Catalyzes the phosphorylation of the position 2 hydroxy group of 4-diphosphocytidyl-2C-methyl-D-erythritol. The polypeptide is 4-diphosphocytidyl-2-C-methyl-D-erythritol kinase (Pseudomonas fluorescens (strain SBW25)).